The following is a 92-amino-acid chain: Small ribosomal subunit protein uS19 (92 aa).

This sequence belongs to the universal ribosomal protein uS19 family.

Protein S19 forms a complex with S13 that binds strongly to the 16S ribosomal RNA. The protein is Small ribosomal subunit protein uS19 of Rhodopseudomonas palustris (strain BisB5).